The chain runs to 329 residues: MVVVNKTNLLLLLLSLCLTLDLSSAQLRRNFYAGSCPNVEQIVRNAVQKKVQQTFTTIPATLRLYFHDCFVNGCDASVMIASTNNNKAEKDHEENLSLAGDGFDTVIKAKEALDAVPNCRNKVSCADILTMATRDVVNLAGGPQYDVELGRLDGLSSTAASVGGKLPHPTDDVNKLTSLFAKNGLSLNDMIALSGAHTLGFAHCTKVFNRIYTFNKTTKVDPTVNKDYVTELKASCPRNIDPRVAINMDPTTPRQFDNVYYKNLQQGKGLFTSDQVLFTDRRSKPTVDLWANNGQLFNQAFINSMIKLGRVGVKTGSNGNIRRDCGAFN.

The first 25 residues, 1–25 (MVVVNKTNLLLLLLSLCLTLDLSSA), serve as a signal peptide directing secretion. Disulfide bonds link Cys-36-Cys-119, Cys-69-Cys-74, Cys-125-Cys-325, and Cys-204-Cys-236. The active-site Proton acceptor is the His-67. Asp-68, Val-71, Gly-73, Asp-75, and Ser-77 together coordinate Ca(2+). Pro-167 serves as a coordination point for substrate. Residue His-197 participates in heme b binding. A Ca(2+)-binding site is contributed by Thr-198. Asn-215 carries N-linked (GlcNAc...) asparagine glycosylation. Positions 249, 252, and 257 each coordinate Ca(2+).

It belongs to the peroxidase family. Classical plant (class III) peroxidase subfamily. Heme b serves as cofactor. It depends on Ca(2+) as a cofactor. In terms of tissue distribution, expressed in roots and leaves.

The protein localises to the secreted. The catalysed reaction is 2 a phenolic donor + H2O2 = 2 a phenolic radical donor + 2 H2O. Functionally, removal of H(2)O(2), oxidation of toxic reductants, biosynthesis and degradation of lignin, suberization, auxin catabolism, response to environmental stresses such as wounding, pathogen attack and oxidative stress. These functions might be dependent on each isozyme/isoform in each plant tissue. Its function is as follows. Exhibits a Ca(2+)-pectate binding affinity which could be interpreted in vivo as a specificity to interact with the pectic structure of the cell wall. This is Peroxidase 50 (PER50) from Arabidopsis thaliana (Mouse-ear cress).